The following is a 113-amino-acid chain: TYRO protein tyrosine kinase-binding protein (113 aa).

The N-terminal stretch at 1-27 (MGGLEPCSRLLLLPLLLAVGGLRPVQA) is a signal peptide. Topologically, residues 28-40 (QAQSDCSCSTVSP) are extracellular. Residues 41 to 61 (GVLAGIVLGDLVLTVLIALAV) traverse the membrane as a helical segment. Position 50 (D50) interacts with Ca(2+). Residues 62–113 (YFLGRLVPRGRGAAEAATRKQRITETESPYQELQGQRSDVYSDLNTQRPYYK) lie on the Cytoplasmic side of the membrane. The interval 75–113 (AEAATRKQRITETESPYQELQGQRSDVYSDLNTQRPYYK) is disordered. The ITAM domain occupies 80-108 (RKQRITETESPYQELQGQRSDVYSDLNTQ). Residues 87 to 113 (TESPYQELQGQRSDVYSDLNTQRPYYK) show a composition bias toward polar residues. A phosphotyrosine mark is found at Y91 and Y102.

Belongs to the TYROBP family. As to quaternary structure, homodimer; disulfide-linked. Homotrimer; disulfide-linked. Homotetramer; disulfide-linked. Homotrimers and homotetramers form when low levels of partner receptors are available and is competitive with assembly with interacting receptors. They may represent alternative oligomerization states or may be intermediates in the receptor assembly process. Binding of a metal cation aids in homooligomerization through coordination of the metal ion by the subunits of the oligomer. Interacts with TREM1. Interacts with TREM2. Interacts with CLECSF5. Interacts with CD300LB and CD300C2. Interacts with CD300E. Interacts (via ITAM domain) with SYK (via SH2 domains); activates SYK mediating neutrophils and macrophages integrin-mediated activation. Interacts with KLRC2. Interacts with CD300H. Interacts with KLRD1. In terms of processing, following ligand binding by associated receptors, tyrosine phosphorylated in the ITAM domain which leads to activation of additional tyrosine kinases and subsequent cell activation.

Its subcellular location is the cell membrane. Adapter protein which non-covalently associates with activating receptors found on the surface of a variety of immune cells to mediate signaling and cell activation following ligand binding by the receptors. TYROBP is tyrosine-phosphorylated in the ITAM domain following ligand binding by the associated receptors which leads to activation of additional tyrosine kinases and subsequent cell activation. Also has an inhibitory role in some cells. Non-covalently associates with activating receptors of the CD300 family to mediate cell activation. Also mediates cell activation through association with activating receptors of the CD200R family. Required for neutrophil activation mediated by integrin. Required for the activation of myeloid cells mediated by the CLEC5A/MDL1 receptor. Associates with natural killer (NK) cell receptors such as the KLRD1/KLRC2 heterodimer to mediate NK cell activation. Associates with TREM1 to mediate activation of neutrophils and monocytes. Associates with TREM2 on monocyte-derived dendritic cells to mediate up-regulation of chemokine receptor CCR7 and dendritic cell maturation and survival. Association with TREM2 mediates cytokine-induced formation of multinucleated giant cells which are formed by the fusion of macrophages. Stabilizes the TREM2 C-terminal fragment (TREM2-CTF) produced by TREM2 ectodomain shedding which suppresses the release of pro-inflammatory cytokines. In microglia, required with TREM2 for phagocytosis of apoptotic neurons. Required with ITGAM/CD11B in microglia to control production of microglial superoxide ions which promote the neuronal apoptosis that occurs during brain development. Promotes pro-inflammatory responses in microglia following nerve injury which accelerates degeneration of injured neurons. Positively regulates the expression of the IRAK3/IRAK-M kinase and IL10 production by liver dendritic cells and inhibits their T cell allosimulatory ability. Negatively regulates B cell proliferation. Required for CSF1-mediated osteoclast cytoskeletal organization. Positively regulates multinucleation during osteoclast development. The protein is TYRO protein tyrosine kinase-binding protein of Macaca mulatta (Rhesus macaque).